Consider the following 541-residue polypeptide: Membrane protein insertase YidC (541 aa).

The helical transmembrane segment at 6–26 threads the bilayer; sequence SLLVLALIFISFLVYQQWQLD. Residues 34-56 are disordered; the sequence is EQTTSITATSDVPASSPSNSQAI. 4 helical membrane-spanning segments follow: residues 337 to 357, 416 to 436, 454 to 474, and 495 to 515; these read FWLL…IICV, LGGC…YWTF, LSAQ…MFLL, and PLVF…YWLV.

It belongs to the OXA1/ALB3/YidC family. Type 1 subfamily. As to quaternary structure, interacts with the Sec translocase complex via SecD. Specifically interacts with transmembrane segments of nascent integral membrane proteins during membrane integration.

It localises to the cell inner membrane. Functionally, required for the insertion and/or proper folding and/or complex formation of integral membrane proteins into the membrane. Involved in integration of membrane proteins that insert both dependently and independently of the Sec translocase complex, as well as at least some lipoproteins. Aids folding of multispanning membrane proteins. The protein is Membrane protein insertase YidC of Haemophilus influenzae (strain ATCC 51907 / DSM 11121 / KW20 / Rd).